Consider the following 147-residue polypeptide: Pathogenesis-related protein PR-4B (147 aa).

The signal sequence occupies residues 1 to 25 (MERVNNYKLCVALLIMSVMMAMAAA). The Barwin domain occupies 26 to 147 (QSATNVRSTY…VNYEFVNCND (122 aa)). 3 disulfide bridges follow: C54-C86, C75-C109, and C89-C145.

It localises to the secreted. It is found in the cell wall. In Nicotiana tabacum (Common tobacco), this protein is Pathogenesis-related protein PR-4B.